The following is a 370-amino-acid chain: Queuine tRNA-ribosyltransferase (370 aa).

Residue aspartate 89 is the Proton acceptor of the active site. Substrate is bound by residues aspartate 89–phenylalanine 93, aspartate 143, glutamine 185, and glycine 212. The RNA binding stretch occupies residues glycine 243–aspartate 249. Aspartate 262 functions as the Nucleophile in the catalytic mechanism. The segment at threonine 267 to arginine 271 is RNA binding; important for wobble base 34 recognition. Residues cysteine 300, cysteine 302, cysteine 305, and histidine 331 each coordinate Zn(2+).

Belongs to the queuine tRNA-ribosyltransferase family. As to quaternary structure, homodimer. Within each dimer, one monomer is responsible for RNA recognition and catalysis, while the other monomer binds to the replacement base PreQ1. The cofactor is Zn(2+).

The enzyme catalyses 7-aminomethyl-7-carbaguanine + guanosine(34) in tRNA = 7-aminomethyl-7-carbaguanosine(34) in tRNA + guanine. It functions in the pathway tRNA modification; tRNA-queuosine biosynthesis. In terms of biological role, catalyzes the base-exchange of a guanine (G) residue with the queuine precursor 7-aminomethyl-7-deazaguanine (PreQ1) at position 34 (anticodon wobble position) in tRNAs with GU(N) anticodons (tRNA-Asp, -Asn, -His and -Tyr). Catalysis occurs through a double-displacement mechanism. The nucleophile active site attacks the C1' of nucleotide 34 to detach the guanine base from the RNA, forming a covalent enzyme-RNA intermediate. The proton acceptor active site deprotonates the incoming PreQ1, allowing a nucleophilic attack on the C1' of the ribose to form the product. After dissociation, two additional enzymatic reactions on the tRNA convert PreQ1 to queuine (Q), resulting in the hypermodified nucleoside queuosine (7-(((4,5-cis-dihydroxy-2-cyclopenten-1-yl)amino)methyl)-7-deazaguanosine). The sequence is that of Queuine tRNA-ribosyltransferase from Hydrogenovibrio crunogenus (strain DSM 25203 / XCL-2) (Thiomicrospira crunogena).